The sequence spans 242 residues: Segregation and condensation protein A (242 aa).

It belongs to the ScpA family. As to quaternary structure, component of a cohesin-like complex composed of ScpA, ScpB and the Smc homodimer, in which ScpA and ScpB bind to the head domain of Smc. The presence of the three proteins is required for the association of the complex with DNA.

The protein localises to the cytoplasm. In terms of biological role, participates in chromosomal partition during cell division. May act via the formation of a condensin-like complex containing Smc and ScpB that pull DNA away from mid-cell into both cell halves. The polypeptide is Segregation and condensation protein A (Lactococcus lactis subsp. cremoris (strain SK11)).